We begin with the raw amino-acid sequence, 470 residues long: Ubiquitin carboxyl-terminal hydrolase calypso (470 aa).

Positions 43–274 (GWLELESDPG…IRFNLMAVVP (232 aa)) constitute a UCH catalytic domain. Cys-129 serves as the catalytic Nucleophile. His-211 functions as the Proton donor in the catalytic mechanism. The disordered stretch occupies residues 305 to 324 (DEQGEGGNGDPQRPDTPSTL). The region spanning 373-401 (NYDKFICTFLSMLAHQGVLGELVSQHLLP) is the ULD domain. The interval 403-470 (KKISGQSAAN…KGRNKCKKRK (68 aa)) is positively charged C-terminal tail required for binding nucleosomes. Positions 422–451 (ANAGATAAGAAGAAPKSQQQQAAAAKNGKS) are enriched in low complexity. The interval 422–470 (ANAGATAAGAAGAAPKSQQQQAAAAKNGKSPSKTPGRRRKGRNKCKKRK) is disordered. Residues 456 to 470 (PGRRRKGRNKCKKRK) show a composition bias toward basic residues.

Belongs to the peptidase C12 family. BAP1 subfamily. As to quaternary structure, catalytic component of the polycomb repressive deubiquitinase (PR-DUB) complex, at least composed of caly/calypso, Asx and sba (MBD5/6 homolog). The PR-DUB complex associates with nucleosomes to mediate deubiquitination of histone H2AK118ub1 substrates; the association requires the positively charged C-terminal tail of caly, probably due to direct binding of DNA. Interacts (via ULD domain) with Asx (via DEUBAD domain); the interaction produces a stable heterodimer with a composite binding site for ubiquitin. Homodimerizes (via coiled-coil hinge-region between the UCH and ULD domains) to mediate assembly of 2 copies of the caly-Asx heterodimer into a bisymmetric tetramer; dimerization enhances PR-DUB association with nucleosomes.

It is found in the nucleus. The enzyme catalyses Thiol-dependent hydrolysis of ester, thioester, amide, peptide and isopeptide bonds formed by the C-terminal Gly of ubiquitin (a 76-residue protein attached to proteins as an intracellular targeting signal).. Functionally, catalytic component of the polycomb repressive deubiquitinase (PR-DUB) complex, a complex that specifically mediates deubiquitination of histone H2A monoubiquitinated at 'Lys-119' (H2AK118ub1). Mediates bisymmetric organization of the PR-DUB complex and is involved in association with nucleosomes to mediate deubiquitination. Does not deubiquitinate monoubiquitinated histone H2B. Required to maintain the transcriptionally repressive state of homeotic genes throughout development. The PR-DUB complex has weak or no activity toward 'Lys-48'- and 'Lys-63'-linked polyubiquitin chains. Polycomb group (PcG) protein. This chain is Ubiquitin carboxyl-terminal hydrolase calypso, found in Drosophila ananassae (Fruit fly).